The sequence spans 463 residues: Eukaryotic translation initiation factor 3 subunit E (463 aa).

The region spanning 224 to 407 is the PCI domain; sequence FNLGENQGCQ…NMLHITRPHA (184 aa). The disordered stretch occupies residues 432-463; sequence QSSVGEPRERGERGERGNKGGRGRPRTQEVAA. The segment covering 437 to 449 has biased composition (basic and acidic residues); the sequence is EPRERGERGERGN.

This sequence belongs to the eIF-3 subunit E family. In terms of assembly, component of the eukaryotic translation initiation factor 3 (eIF-3) complex.

It localises to the cytoplasm. Component of the eukaryotic translation initiation factor 3 (eIF-3) complex, which is involved in protein synthesis of a specialized repertoire of mRNAs and, together with other initiation factors, stimulates binding of mRNA and methionyl-tRNAi to the 40S ribosome. The eIF-3 complex specifically targets and initiates translation of a subset of mRNAs involved in cell proliferation. In Cryptococcus neoformans var. neoformans serotype D (strain JEC21 / ATCC MYA-565) (Filobasidiella neoformans), this protein is Eukaryotic translation initiation factor 3 subunit E.